A 134-amino-acid polypeptide reads, in one-letter code: MAKSPNNSAAQRVRKKVRKNVADGIAHVHASFNNTIITITDRQGNALSWASSGGQGFKGSRKSTPFAAQVASEVAGRAAIEQGIKNLDVEIKGPGPGRESSVRALGALGIRINSIADVTPVPHNGCRPQKRRRI.

This sequence belongs to the universal ribosomal protein uS11 family. Part of the 30S ribosomal subunit. Interacts with proteins S7 and S18. Binds to IF-3.

In terms of biological role, located on the platform of the 30S subunit, it bridges several disparate RNA helices of the 16S rRNA. Forms part of the Shine-Dalgarno cleft in the 70S ribosome. This chain is Small ribosomal subunit protein uS11, found in Polaromonas naphthalenivorans (strain CJ2).